The chain runs to 540 residues: FAD-binding monooxygenase lolF1 (540 aa).

Residues 43-46 (VWRE) and 55-58 (DSLF) contribute to the FAD site. NADP(+)-binding positions include 53 to 55 (AVD), 182 to 188 (TGPSGVQ), and 205 to 206 (QS).

Belongs to the FAD-binding monooxygenase family. The cofactor is FAD.

The protein operates within alkaloid biosynthesis. Functionally, FAD-binding monooxygenase; part of the gene cluster that mediates the biosynthesis of loline alkaloids, potent insecticidal agents composed of a pyrrolizidine ring system and an uncommon ether bridge linking carbons 2 and 7. Lolines are structurally differentiated by the various modifications of the L-amino group and include norloline, loline, N-methylloline, N-acetylloline, N-acetylnorloline, and N-formylloline. The first committed step is the condensation of O-acetyl-L-homoserine (derived from L-aspartic acid) and L-proline, probably catalyzed by the gamma-type pyridoxal 5'-phosphate(PLP)-dependent enzyme lolC, to give the diamino diacid, NACPP. Ensuing cyclization, decarboxylation, and acetylation steps yield 1-exo-acetamidopyrrolizidine (AcAP). LolO is required for installation of the ether bridge upon the pathway intermediate, 1-exo-acetamidopyrrolizidine (AcAP). In sequential 2-oxoglutarate- and O(2)-consuming steps, lolO removes hydrogens from C2 and C7 of AcAP to form both carbon-oxygen bonds in N-acetylnorloline (NANL), the precursor to all other lolines. The enzymes lolD, lolE, lolF and lolT have also been proposed to be involved in the ether-bridge installation. Further processing of the exocyclic moiety of NANL by fungal N-acetamidase (LolN), methyltransferase (LolM), and cytochrome P450 (LolP) enzymes, with occasional involvement of a plant acetyltransferase, generates the other known lolines. LolN transforms NANL to norlonine which is monomethylated and dimethylated to respectively lonine and N-methyllonine (NML) by lolM. LolP catalyzes hydroxylation of the methyl group in N-methylloline (NML) and further oxygenation to N-formylloline (NFL). A plant acetyltransferase is responsible for the acetylation of loline to form N-acetylloline (NAL). LolA might interact with aspartate kinase to prevent feedback inhibition of its activity by these end products and thereby promote production of L-homoserine from L-aspartate. This Epichloe uncinata (Endophyte fungus) protein is FAD-binding monooxygenase lolF1.